The primary structure comprises 89 residues: Small ribosomal subunit protein uS15 (89 aa).

It belongs to the universal ribosomal protein uS15 family. In terms of assembly, part of the 30S ribosomal subunit. Forms a bridge to the 50S subunit in the 70S ribosome, contacting the 23S rRNA.

Functionally, one of the primary rRNA binding proteins, it binds directly to 16S rRNA where it helps nucleate assembly of the platform of the 30S subunit by binding and bridging several RNA helices of the 16S rRNA. In terms of biological role, forms an intersubunit bridge (bridge B4) with the 23S rRNA of the 50S subunit in the ribosome. The polypeptide is Small ribosomal subunit protein uS15 (Beutenbergia cavernae (strain ATCC BAA-8 / DSM 12333 / CCUG 43141 / JCM 11478 / NBRC 16432 / NCIMB 13614 / HKI 0122)).